The sequence spans 121 residues: D-ornithine 4,5-aminomutase subunit alpha (121 aa).

As to quaternary structure, heterotetramer of 2 alpha (OraS) and 2 beta (OraE) subunits.

It catalyses the reaction D-ornithine = (2R,4S)-2,4-diaminopentanoate. Increased activity in the presence of dithiothreitol (DTT) in vitro. Inhibited by 1 mM potassium phosphate and potassium chloride. Inhibited by L-alpha-ornithine, D,L-alpha-lysine, L-beta-lysine (50%-60%), L-alpha-lysine (26%) and by delta-amino-n-valeric acid to a lesser extent. Significant decrease in activity is observed in the presence of 0.2 mM p-chloromercuribenzoate, N-ethylmaleimide and also by 2 mM iodoacetate to a lesser extent but not inhibited by arsenite. Functionally, component of a complex that catalyzes the reversible migration of the omega amino group of D-ornithine to C-4 to form (2R,4S)-2,4-diaminopentanoic acid. The role of OraS remains obscure; however, it seems to be required for a correct folding of the OraE subunit. The complex is active only on D-ornithine and 2,4-diaminopentanoic acid and not active on L-ornithine, L-beta-lysine, L-alpha-lysine or D-alpha-lysine. This Acetoanaerobium sticklandii (strain ATCC 12662 / DSM 519 / JCM 1433 / CCUG 9281 / NCIMB 10654 / HF) (Clostridium sticklandii) protein is D-ornithine 4,5-aminomutase subunit alpha (oraS).